The sequence spans 315 residues: tRNA-cytidine(32) 2-sulfurtransferase (315 aa).

Positions 54–59 (SGGKDS) match the PP-loop motif motif. 3 residues coordinate [4Fe-4S] cluster: Cys-129, Cys-132, and Cys-220.

The protein belongs to the TtcA family. Homodimer. It depends on Mg(2+) as a cofactor. [4Fe-4S] cluster is required as a cofactor.

It is found in the cytoplasm. It carries out the reaction cytidine(32) in tRNA + S-sulfanyl-L-cysteinyl-[cysteine desulfurase] + AH2 + ATP = 2-thiocytidine(32) in tRNA + L-cysteinyl-[cysteine desulfurase] + A + AMP + diphosphate + H(+). It participates in tRNA modification. Functionally, catalyzes the ATP-dependent 2-thiolation of cytidine in position 32 of tRNA, to form 2-thiocytidine (s(2)C32). The sulfur atoms are provided by the cysteine/cysteine desulfurase (IscS) system. The chain is tRNA-cytidine(32) 2-sulfurtransferase from Bordetella avium (strain 197N).